A 214-amino-acid polypeptide reads, in one-letter code: Probable transaldolase (214 aa).

The active-site Schiff-base intermediate with substrate is Lys-83.

The protein belongs to the transaldolase family. Type 3B subfamily.

It is found in the cytoplasm. The catalysed reaction is D-sedoheptulose 7-phosphate + D-glyceraldehyde 3-phosphate = D-erythrose 4-phosphate + beta-D-fructose 6-phosphate. The protein operates within carbohydrate degradation; pentose phosphate pathway; D-glyceraldehyde 3-phosphate and beta-D-fructose 6-phosphate from D-ribose 5-phosphate and D-xylulose 5-phosphate (non-oxidative stage): step 2/3. In terms of biological role, transaldolase is important for the balance of metabolites in the pentose-phosphate pathway. This Geotalea uraniireducens (strain Rf4) (Geobacter uraniireducens) protein is Probable transaldolase.